We begin with the raw amino-acid sequence, 375 residues long: Queuine tRNA-ribosyltransferase (375 aa).

Catalysis depends on D89, which acts as the Proton acceptor. Residues 89–93 (DSGGF), D143, Q187, and G214 each bind substrate. The segment at 245–251 (GVGKPED) is RNA binding. Residue D264 is the Nucleophile of the active site. Residues 269 to 273 (TRNAR) are RNA binding; important for wobble base 34 recognition. 4 residues coordinate Zn(2+): C302, C304, C307, and H333.

Belongs to the queuine tRNA-ribosyltransferase family. Homodimer. Within each dimer, one monomer is responsible for RNA recognition and catalysis, while the other monomer binds to the replacement base PreQ1. Requires Zn(2+) as cofactor.

The enzyme catalyses 7-aminomethyl-7-carbaguanine + guanosine(34) in tRNA = 7-aminomethyl-7-carbaguanosine(34) in tRNA + guanine. It functions in the pathway tRNA modification; tRNA-queuosine biosynthesis. In terms of biological role, catalyzes the base-exchange of a guanine (G) residue with the queuine precursor 7-aminomethyl-7-deazaguanine (PreQ1) at position 34 (anticodon wobble position) in tRNAs with GU(N) anticodons (tRNA-Asp, -Asn, -His and -Tyr). Catalysis occurs through a double-displacement mechanism. The nucleophile active site attacks the C1' of nucleotide 34 to detach the guanine base from the RNA, forming a covalent enzyme-RNA intermediate. The proton acceptor active site deprotonates the incoming PreQ1, allowing a nucleophilic attack on the C1' of the ribose to form the product. After dissociation, two additional enzymatic reactions on the tRNA convert PreQ1 to queuine (Q), resulting in the hypermodified nucleoside queuosine (7-(((4,5-cis-dihydroxy-2-cyclopenten-1-yl)amino)methyl)-7-deazaguanosine). This Salmonella choleraesuis (strain SC-B67) protein is Queuine tRNA-ribosyltransferase.